Here is a 136-residue protein sequence, read N- to C-terminus: Large ribosomal subunit protein bL19 (136 aa).

It belongs to the bacterial ribosomal protein bL19 family.

In terms of biological role, this protein is located at the 30S-50S ribosomal subunit interface and may play a role in the structure and function of the aminoacyl-tRNA binding site. This Xylella fastidiosa (strain M23) protein is Large ribosomal subunit protein bL19.